The following is an 819-amino-acid chain: Protein EFR3 homolog A (819 aa).

A phosphoserine mark is found at S360, S363, S420, and S692.

It belongs to the EFR3 family. In terms of assembly, component of a phosphatidylinositol 4-kinase (PI4K) complex, composed of PI4KA, EFR3 (EFR3A or EFR3B), TTC7 (TTC7A or TTC7B) and HYCC (HYCC1 or HYCC2). Post-translationally, palmitoylated at its N-terminus, anchoring the protein to the plasma membrane. In terms of tissue distribution, widely expressed. Expressed in neurons of the superior olivary complex of the auditory brainstem. Also expressed at lower levels in the cochlear nucleus, the lateral leminiscal nuclei and the inferior collicus.

The protein resides in the cell membrane. The protein localises to the cytoplasm. Its subcellular location is the cytosol. Component of a complex required to localize phosphatidylinositol 4-kinase (PI4K) to the plasma membrane. The complex acts as a regulator of phosphatidylinositol 4-phosphate (PtdIns(4)P) synthesis. In the complex, EFR3A probably acts as the membrane-anchoring component. Also involved in responsiveness to G-protein-coupled receptors; it is however unclear whether this role is direct or indirect. The chain is Protein EFR3 homolog A from Mus musculus (Mouse).